The chain runs to 163 residues: Fatty acid-binding protein homolog (163 aa).

The signal sequence occupies residues 1-23; the sequence is MRCLVALILTVLIVTPEVEAKTL.

This sequence belongs to the calycin superfamily. Fatty-acid binding protein (FABP) family. As to expression, abundant in the fluid surrounding the developing embryo of Ascaris suum.

May play a role in sequestering potentially toxic fatty acids and their peroxidation products, or it may be involved in the maintenance of the impermeable lipid layer of the eggshell. This Ascaris suum (Pig roundworm) protein is Fatty acid-binding protein homolog.